An 859-amino-acid polypeptide reads, in one-letter code: Magnesium transporter ALR1 (859 aa).

Positions 1–20 (MSSSSSSSESSPNLSRSNSL) are enriched in low complexity. 2 disordered regions span residues 1 to 281 (MSSS…MPPQ) and 330 to 399 (TSST…NIPS). An N-acetylserine modification is found at serine 2. 2 stretches are compositionally biased toward basic and acidic residues: residues 28–42 (KTED…RQHP) and 55–73 (KNKE…EQKS). Tyrosine 77 bears the Phosphotyrosine mark. Serine 85 carries the phosphoserine modification. Over residues 144-154 (PPKDVGVKRDY) the composition is skewed to basic and acidic residues. The segment covering 157–176 (SSSTASSGNKSKLSASSSAS) has biased composition (low complexity). Serine 185 and serine 188 each carry phosphoserine. Positions 193–203 (IPHESKSDTHS) are enriched in basic and acidic residues. The span at 213–235 (YSTTSAHSSINPAVLLTKSTSQK) shows a compositional bias: polar residues. Phosphoserine occurs at positions 220, 221, and 236. Phosphothreonine is present on threonine 242. Over residues 252–265 (TRASFDSDVSQASR) the composition is skewed to polar residues. A compositionally biased stretch (low complexity) spans 330 to 339 (TSSTSTSGSS). Over residues 353–375 (EKSESTNETEIHEKKEDEHEKIK) the composition is skewed to basic and acidic residues. Helical transmembrane passes span 744-764 (TMIG…GMNV) and 773-793 (IAWW…GWFL). The disordered stretch occupies residues 830–859 (FNDRSKNINVRAGPSNKSVASLPSRYSRYD). Phosphoserine is present on serine 850.

The protein belongs to the CorA metal ion transporter (MIT) (TC 1.A.35) family.

It is found in the cell membrane. Plasma membrane magnesium transporter. This chain is Magnesium transporter ALR1 (ALR1), found in Saccharomyces cerevisiae (strain ATCC 204508 / S288c) (Baker's yeast).